Reading from the N-terminus, the 534-residue chain is Cytochrome P450 714B1 (534 aa).

Residue methionine 1 is a topological domain, lumenal. The chain crosses the membrane as a helical; Signal-anchor for type III membrane protein span at residues 2 to 22 (VVVVAAAMAAASLCCGVAAYL). Topologically, residues 23 to 534 (YYVLWLAPER…RSKCDWAGFD (512 aa)) are cytoplasmic. Heme is bound at residue cysteine 472.

Belongs to the cytochrome P450 family. Heme serves as cofactor. In terms of tissue distribution, highly expressed in spikelet and uppermost internode. Detected in shoots, roots, leaves and anthers.

Its subcellular location is the membrane. Functionally, catalyzes the 13-hydroxylation of gibberellins (GAs). Determines the ratio of GA4 and GA1. Converts GA12 into GA53. The polypeptide is Cytochrome P450 714B1 (CYP714B1) (Oryza sativa subsp. japonica (Rice)).